The primary structure comprises 1203 residues: ATP-dependent helicase/nuclease subunit A (1203 aa).

The 469-residue stretch at 4-472 folds into the UvrD-like helicase ATP-binding domain; sequence VKLTPEQNEA…IRLKENFRSR (469 aa). Position 25 to 32 (25 to 32) interacts with ATP; it reads ASAGSGKT. The UvrD-like helicase C-terminal domain maps to 503-785; it reads VQGNISDYPV…RVMTFHKSKG (283 aa).

It belongs to the helicase family. AddA subfamily. In terms of assembly, heterodimer of AddA and AddB/RexB. Mg(2+) serves as cofactor.

It catalyses the reaction Couples ATP hydrolysis with the unwinding of duplex DNA by translocating in the 3'-5' direction.. The catalysed reaction is ATP + H2O = ADP + phosphate + H(+). Functionally, the heterodimer acts as both an ATP-dependent DNA helicase and an ATP-dependent, dual-direction single-stranded exonuclease. Recognizes the chi site generating a DNA molecule suitable for the initiation of homologous recombination. The AddA nuclease domain is required for chi fragment generation; this subunit has the helicase and 3' -&gt; 5' nuclease activities. This is ATP-dependent helicase/nuclease subunit A from Lactococcus lactis subsp. cremoris (strain SK11).